The sequence spans 83 residues: Short neurotoxin VAN-29 (83 aa).

Positions 1 to 21 are cleaved as a signal peptide; it reads MKTLLLTLVVVTIVCLDLGYT. 4 cysteine pairs are disulfide-bonded: Cys-24/Cys-45, Cys-38/Cys-62, Cys-64/Cys-75, and Cys-76/Cys-81.

Belongs to the three-finger toxin family. Short-chain subfamily. Type I alpha-neurotoxin sub-subfamily. In terms of tissue distribution, expressed by the venom gland.

Its subcellular location is the secreted. In terms of biological role, binds to muscle nicotinic acetylcholine receptor (nAChR) and inhibit acetylcholine from binding to the receptor, thereby impairing neuromuscular transmission. The protein is Short neurotoxin VAN-29 of Laticauda laticaudata (Blue-ringed sea krait).